The primary structure comprises 600 residues: ATP-dependent lipid A-core flippase (600 aa).

The next 4 membrane-spanning stretches (helical) occupy residues 26–46 (VGIF…QPML), 82–102 (LLIV…NYFL), 167–187 (VFLF…MLAI), and 266–286 (PMLQ…VLFL). In terms of domain architecture, ABC transmembrane type-1 spans 30 to 321 (LLSIIGFVIF…LSEVSSTIQK (292 aa)). The 237-residue stretch at 353–589 (LEVKNLSFFY…NGYYARLHAM (237 aa)) folds into the ABC transporter domain. Residue 387–394 (GRSGSGKS) coordinates ATP.

It belongs to the ABC transporter superfamily. Lipid exporter (TC 3.A.1.106) family. Homodimer.

The protein localises to the cell inner membrane. It carries out the reaction ATP + H2O + lipid A-core oligosaccharideSide 1 = ADP + phosphate + lipid A-core oligosaccharideSide 2.. In terms of biological role, involved in lipopolysaccharide (LPS) biosynthesis. Translocates lipid A-core from the inner to the outer leaflet of the inner membrane. Transmembrane domains (TMD) form a pore in the inner membrane and the ATP-binding domain (NBD) is responsible for energy generation. This Pseudomonas syringae pv. syringae (strain B728a) protein is ATP-dependent lipid A-core flippase.